The primary structure comprises 305 residues: MVDKLTHLKQLEAESIHIIREVAAEFGNPVMLYSIGKDSAVMLHLARKAFFPGKLPFPVLHVDTRWKFQEMYRFREKMVSEMGLDLITHINPDGVAQDMNPFTYGSAKHTDVMKTEGLKQALDKYGFDAAFGGARRDEEKSRAKERVYSFRDSKHRWDPKNQRPELWNLYNGKVKKGESIRVFPLSNWTELDIWQYIYLEQIPIVPLYFAAEREVVELNGTLVMIDDERILSYLTPEQKASIHKKMVRFRTLGCYPLTGAVESTATTLPEIIQEMLLTRTSERQGRVIDHDATGSMEEKKRQGYF.

Belongs to the PAPS reductase family. CysD subfamily. In terms of assembly, heterodimer composed of CysD, the smaller subunit, and CysN.

It carries out the reaction sulfate + ATP + H(+) = adenosine 5'-phosphosulfate + diphosphate. The protein operates within sulfur metabolism; hydrogen sulfide biosynthesis; sulfite from sulfate: step 1/3. With CysN forms the ATP sulfurylase (ATPS) that catalyzes the adenylation of sulfate producing adenosine 5'-phosphosulfate (APS) and diphosphate, the first enzymatic step in sulfur assimilation pathway. APS synthesis involves the formation of a high-energy phosphoric-sulfuric acid anhydride bond driven by GTP hydrolysis by CysN coupled to ATP hydrolysis by CysD. The chain is Sulfate adenylyltransferase subunit 2 from Stutzerimonas stutzeri (strain A1501) (Pseudomonas stutzeri).